Consider the following 376-residue polypeptide: Arf-GAP with dual PH domain-containing protein 2 (376 aa).

The region spanning 9-130 (KRLLELLQAA…EFMAEKAVSP (122 aa)) is the Arf-GAP domain. A C4-type zinc finger spans residues 25–48 (CADCGAADPDWASYKLGVFICLHC). PH domains are found at residues 131 to 232 (PGDR…AARL) and 254 to 360 (NYLK…GVLS).

In terms of tissue distribution, expressed in many tissues, with highest levels in fat, heart and skeletal muscle. Also detected in kidney, liver and lung.

The protein localises to the cytoplasm. Its subcellular location is the cell membrane. Its function is as follows. GTPase-activating protein for the ADP ribosylation factor family (Potential). Binds phosphatidylinositol 4,5-bisphosphate, phosphatidylinositol 3,4,5-trisphosphate (PtdInsP3) and inositol 1,3,4,5-tetrakisphosphate (InsP4). Binding of phosphatidylinositol 3,5-bisphosphate and phosphatidylinositol 3,4-bisphosphate occurs at a much lower affinity. Possesses a stoichiometry of two binding sites for InsP4 with identical affinity. This is Arf-GAP with dual PH domain-containing protein 2 (Adap2) from Rattus norvegicus (Rat).